We begin with the raw amino-acid sequence, 343 residues long: Uroporphyrinogen decarboxylase (343 aa).

Substrate is bound by residues Arg23 to Arg27, Asp73, Tyr151, Ser206, and His322.

It belongs to the uroporphyrinogen decarboxylase family. In terms of assembly, homodimer.

It is found in the cytoplasm. It carries out the reaction uroporphyrinogen III + 4 H(+) = coproporphyrinogen III + 4 CO2. It functions in the pathway porphyrin-containing compound metabolism; protoporphyrin-IX biosynthesis; coproporphyrinogen-III from 5-aminolevulinate: step 4/4. Functionally, catalyzes the decarboxylation of four acetate groups of uroporphyrinogen-III to yield coproporphyrinogen-III. This Granulibacter bethesdensis (strain ATCC BAA-1260 / CGDNIH1) protein is Uroporphyrinogen decarboxylase.